The sequence spans 506 residues: Arabinose import ATP-binding protein AraG (506 aa).

2 ABC transporter domains span residues 10–245 (LEFC…MVGR) and 253–501 (YRSR…MLGN). Residue 42–49 (GENGAGKS) coordinates ATP.

This sequence belongs to the ABC transporter superfamily. Arabinose importer (TC 3.A.1.2.2) family. The complex is composed of two ATP-binding proteins (AraG), two transmembrane proteins (AraH) and a solute-binding protein (AraF).

The protein localises to the cell inner membrane. The catalysed reaction is L-arabinose(out) + ATP + H2O = L-arabinose(in) + ADP + phosphate + H(+). Functionally, part of the ABC transporter complex AraFGH involved in arabinose import. Responsible for energy coupling to the transport system. This is Arabinose import ATP-binding protein AraG from Vibrio parahaemolyticus serotype O3:K6 (strain RIMD 2210633).